Consider the following 289-residue polypeptide: Probable ABC transporter permease protein BRA0749/BS1330_II0742 (289 aa).

The next 6 membrane-spanning stretches (helical) occupy residues phenylalanine 9 to leucine 29, valine 70 to leucine 90, valine 99 to tryptophan 119, isoleucine 144 to valine 166, isoleucine 213 to threonine 233, and glutamate 260 to isoleucine 280. Residues leucine 65 to tyrosine 279 form the ABC transmembrane type-1 domain.

It belongs to the binding-protein-dependent transport system permease family. In terms of assembly, the complex is composed of two ATP-binding proteins (BRA0745), two transmembrane proteins (BRA0749) and a solute-binding protein (BRA0748).

Its subcellular location is the cell inner membrane. Functionally, probably part of an ABC transporter complex. Probably responsible for the translocation of the substrate across the membrane. In Brucella suis biovar 1 (strain 1330), this protein is Probable ABC transporter permease protein BRA0749/BS1330_II0742.